The chain runs to 807 residues: Glycerol-3-phosphate acyltransferase (807 aa).

The HXXXXD motif motif lies at 308–313 (CHRSHM).

The protein belongs to the GPAT/DAPAT family.

The protein localises to the cell inner membrane. The catalysed reaction is sn-glycerol 3-phosphate + an acyl-CoA = a 1-acyl-sn-glycero-3-phosphate + CoA. It participates in phospholipid metabolism; CDP-diacylglycerol biosynthesis; CDP-diacylglycerol from sn-glycerol 3-phosphate: step 1/3. The chain is Glycerol-3-phosphate acyltransferase from Shewanella sp. (strain W3-18-1).